Here is a 390-residue protein sequence, read N- to C-terminus: E3 ubiquitin-protein ligase At4g11680 (390 aa).

A compositionally biased stretch (low complexity) spans 1 to 19 (MSSSSSTTTNTTTESDSSS). Residues 1-39 (MSSSSSTTTNTTTESDSSSLPTHIGRSNSDGIIDTTPFL) form a disordered region. Transmembrane regions (helical) follow at residues 109–129 (VVFLDILWNLAFVAIGVAVLI), 142–162 (VWVVGYGIQCWLHMACVCVEY), 212–232 (MFSFIWWIIGFYWVSAGGQTL), 244–264 (IIFLGFDVFFVVFCVALACVI), and 265–285 (GLAVCCCLPCIIAILYAVADQ). An RING-type; atypical zinc finger spans residues 338–379 (CCICLCEYEDGVELRELPCNHHFHCTCIDKWLHINSRCPLCK).

It is found in the membrane. It carries out the reaction S-ubiquitinyl-[E2 ubiquitin-conjugating enzyme]-L-cysteine + [acceptor protein]-L-lysine = [E2 ubiquitin-conjugating enzyme]-L-cysteine + N(6)-ubiquitinyl-[acceptor protein]-L-lysine.. The protein operates within protein modification; protein ubiquitination. Its function is as follows. Mediates E2-dependent protein ubiquitination in vitro. This Arabidopsis thaliana (Mouse-ear cress) protein is E3 ubiquitin-protein ligase At4g11680.